We begin with the raw amino-acid sequence, 384 residues long: Glucans biosynthesis protein C (384 aa).

10 helical membrane passes run 17-37 (AWLM…THSW), 54-74 (FIHA…SYML), 91-111 (VGIP…ILLQ), 140-160 (LWFL…FTWF), 173-193 (AISL…YAAI), 212-232 (FIVM…LAFI), 240-260 (FTTP…AYLL), 274-294 (TESV…FSLG), 311-331 (ASLF…AYIT), and 338-358 (LIGF…LYEI).

It belongs to the acyltransferase 3 family. OpgC subfamily.

It localises to the cell membrane. Its pathway is glycan metabolism; osmoregulated periplasmic glucan (OPG) biosynthesis. In terms of biological role, necessary for the succinyl substitution of periplasmic glucans. Could catalyze the transfer of succinyl residues from the cytoplasmic side of the membrane to the nascent glucan backbones on the periplasmic side of the membrane. The chain is Glucans biosynthesis protein C from Salmonella gallinarum (strain 287/91 / NCTC 13346).